We begin with the raw amino-acid sequence, 393 residues long: Telomeric repeat-binding factor 2-interacting protein 1 (393 aa).

An N-acetylalanine modification is found at alanine 2. A BRCT domain is found at 10–101 (DPNGPTHSST…EKLELEAYRL (92 aa)). Residues serine 36 and serine 43 each carry the phosphoserine modification. Residues 104–132 (TEQASDPKPGASAEGSTEPEPQPLTGRIA) are disordered. A Glycyl lysine isopeptide (Lys-Gly) (interchain with G-Cter in SUMO2) cross-link involves residue lysine 111. A Myb-like domain is found at 125–185 (QPLTGRIAYT…SLKDRYLKHL (61 aa)). Phosphoserine occurs at positions 151 and 153. A Glycyl lysine isopeptide (Lys-Gly) (interchain with G-Cter in SUMO2) cross-link involves residue lysine 191. Disordered regions lie at residues 194–248 (LGNA…EADN) and 272–305 (HITM…TQEV). Phosphoserine is present on residues serine 200 and serine 203. Residues lysine 205, lysine 209, and lysine 237 each participate in a glycyl lysine isopeptide (Lys-Gly) (interchain with G-Cter in SUMO2) cross-link. Basic and acidic residues predominate over residues 223–248 (QNKRTPDLPEEECVKGETKENGEADN). Residues 282-297 (TPEEDSETQPDEEEEE) are compositionally biased toward acidic residues. Lysine 366 participates in a covalent cross-link: Glycyl lysine isopeptide (Lys-Gly) (interchain with G-Cter in SUMO2). The Nuclear localization signal motif lies at 377 to 393 (KKYGAQNVARRIEFRKK).

The protein belongs to the RAP1 family. Associates with the I-kappa-B-kinase (IKK) core complex, composed of CHUK, IKBKB and IKBKG. Homodimer. Component of the shelterin complex (telosome) composed of TERF1, TERF2, TINF2, TERF2IP ACD and POT1. Interacts with TERF2 (but not TERF1) with its C-terminus. Interacts with SLX4/BTBD12. Interacts with TERF2; the interaction is direct.

The protein localises to the nucleus. It localises to the cytoplasm. It is found in the chromosome. Its subcellular location is the telomere. Acts both as a regulator of telomere function and as a transcription regulator. Involved in the regulation of telomere length and protection as a component of the shelterin complex (telosome). In contrast to other components of the shelterin complex, it is dispensible for telomere capping and does not participate in the protection of telomeres against non-homologous end-joining (NHEJ)-mediated repair. Instead, it is required to negatively regulate telomere recombination and is essential for repressing homology-directed repair (HDR), which can affect telomere length. Does not bind DNA directly: recruited to telomeric double-stranded 5'-TTAGGG-3' repeats via its interaction with TERF2. Independently of its function in telomeres, also acts as a transcription regulator: recruited to extratelomeric 5'-TTAGGG-3' sites via its association with TERF2 or other factors, and regulates gene expression. When cytoplasmic, associates with the I-kappa-B-kinase (IKK) complex and acts as a regulator of the NF-kappa-B signaling by promoting IKK-mediated phosphorylation of RELA/p65, leading to activate expression of NF-kappa-B target genes. This chain is Telomeric repeat-binding factor 2-interacting protein 1 (Terf2ip), found in Rattus norvegicus (Rat).